Reading from the N-terminus, the 364-residue chain is UDP-N-acetylglucosamine--N-acetylmuramyl-(pentapeptide) pyrophosphoryl-undecaprenol N-acetylglucosamine transferase (364 aa).

Residues 10 to 12 (TGG), N124, R166, S196, and Q297 each bind UDP-N-acetyl-alpha-D-glucosamine.

This sequence belongs to the glycosyltransferase 28 family. MurG subfamily.

Its subcellular location is the cell membrane. The catalysed reaction is di-trans,octa-cis-undecaprenyl diphospho-N-acetyl-alpha-D-muramoyl-L-alanyl-D-glutamyl-meso-2,6-diaminopimeloyl-D-alanyl-D-alanine + UDP-N-acetyl-alpha-D-glucosamine = di-trans,octa-cis-undecaprenyl diphospho-[N-acetyl-alpha-D-glucosaminyl-(1-&gt;4)]-N-acetyl-alpha-D-muramoyl-L-alanyl-D-glutamyl-meso-2,6-diaminopimeloyl-D-alanyl-D-alanine + UDP + H(+). It participates in cell wall biogenesis; peptidoglycan biosynthesis. Cell wall formation. Catalyzes the transfer of a GlcNAc subunit on undecaprenyl-pyrophosphoryl-MurNAc-pentapeptide (lipid intermediate I) to form undecaprenyl-pyrophosphoryl-MurNAc-(pentapeptide)GlcNAc (lipid intermediate II). The sequence is that of UDP-N-acetylglucosamine--N-acetylmuramyl-(pentapeptide) pyrophosphoryl-undecaprenol N-acetylglucosamine transferase from Thermoanaerobacter pseudethanolicus (strain ATCC 33223 / 39E) (Clostridium thermohydrosulfuricum).